We begin with the raw amino-acid sequence, 205 residues long: Protein Nef (205 aa).

A lipid anchor (N-myristoyl glycine; by host) is attached at Gly2. Residue Ser6 is modified to Phosphoserine; by host. Residues 62 to 65 (EEEE) are acidic; interacts with host PACS1 and PACS2; stabilizes the interaction of NEF/MHC-I with host AP1M1; necessary for MHC-I internalization. The tract at residues 69 to 78 (PVTPQVPLRP) is SH3-binding; interaction with Src family tyrosine kinases. The short motif at 72-75 (PQVP) is the PxxP; stabilizes the interaction of NEF/MHC-I with host AP1M1; necessary for MHC-I internalization element. The segment at 108 to 124 (DILDLWIHHTQGYFPDW) is mediates dimerization, Nef-PTE1 interaction. The tract at residues 148 to 179 (VEPEKEEANKGENTSLLHPVSLHGMDDPEREV) is binding to ATP6V1H. The short motif at 163–164 (LL) is the Dileucine internalization motif; necessary for CD4 internalization element. The Diacidic; necessary for CD4 internalization signature appears at 173-174 (DD).

The protein belongs to the lentivirus primate group Nef protein family. Monomer; cytosolic form. Homodimer; membrane bound form. Interacts with Nef associated p21-activated kinase (PAK2); this interaction activates PAK2. Associates with the Nef-MHC-I-AP1 complex; this complex is required for MHC-I internalization. Interacts (via C-terminus) with host PI3-kinase. Interacts with host PACS1; this interaction seems to be weak. Interacts with host PACS2. Interacts with host LCK and MAPK3; these interactions inhibit the kinase activity of the latter. Interacts with host ATP6V1H; this interaction may play a role in CD4 endocytosis. Associates with the CD4-Nef-AP2 complex; this complex is required for CD4 internalization. Interacts with host AP2 subunit alpha and AP2 subunit sigma2. Interacts with TCR-zeta chain; this interaction up-regulates the Fas ligand (FasL) surface expression. Interacts with host HCK, LYN, and SRC; these interactions activate the Src family kinases. Interacts with MAP3K5; this interaction inhibits the Fas and TNFR-mediated death signals. Interacts with beta-COP and PTE1. Interacts with human RACK1; this increases Nef phosphorylation by PKC. Interacts with TP53; this interaction decreases the half-life of TP53, protecting the infected cell against p53-mediated apoptosis. In terms of processing, the virion-associated Nef proteins are cleaved by the viral protease to release the soluble C-terminal core protein. Nef is probably cleaved concomitantly with viral structural proteins on maturation of virus particles. Post-translationally, myristoylated. Phosphorylated on serine residues, probably by host PKCdelta and theta.

Its subcellular location is the host cell membrane. It localises to the virion. It is found in the secreted. The protein resides in the host Golgi apparatus membrane. Functionally, factor of infectivity and pathogenicity, required for optimal virus replication. Alters numerous pathways of T-lymphocyte function and down-regulates immunity surface molecules in order to evade host defense and increase viral infectivity. Alters the functionality of other immunity cells, like dendritic cells, monocytes/macrophages and NK cells. In terms of biological role, in infected CD4(+) T-lymphocytes, down-regulates the surface MHC-I, mature MHC-II, CD4, CD28, CCR5 and CXCR4 molecules. Mediates internalization and degradation of host CD4 through the interaction of with the cytoplasmic tail of CD4, the recruitment of AP-2 (clathrin adapter protein complex 2), internalization through clathrin coated pits, and subsequent transport to endosomes and lysosomes for degradation. Diverts host MHC-I molecules to the trans-Golgi network-associated endosomal compartments by an endocytic pathway to finally target them for degradation. MHC-I down-regulation may involve AP-1 (clathrin adapter protein complex 1) or possibly Src family kinase-ZAP70/Syk-PI3K cascade recruited by PACS2. In consequence infected cells are masked for immune recognition by cytotoxic T-lymphocytes. Decreasing the number of immune receptors also prevents reinfection by more HIV particles (superinfection). Down-regulates host SERINC3 and SERINC5 thereby excluding these proteins from the viral particles. Virion infectivity is drastically higher when SERINC3 or SERINC5 are excluded from the viral envelope, because these host antiviral proteins impair the membrane fusion event necessary for subsequent virion penetration. Bypasses host T-cell signaling by inducing a transcriptional program nearly identical to that of anti-CD3 cell activation. Interaction with TCR-zeta chain up-regulates the Fas ligand (FasL). Increasing surface FasL molecules and decreasing surface MHC-I molecules on infected CD4(+) cells send attacking cytotoxic CD8+ T-lymphocytes into apoptosis. Its function is as follows. Plays a role in optimizing the host cell environment for viral replication without causing cell death by apoptosis. Protects the infected cells from apoptosis in order to keep them alive until the next virus generation is ready to strike. Inhibits the Fas and TNFR-mediated death signals by blocking MAP3K5/ASK1. Decreases the half-life of TP53, protecting the infected cell against p53-mediated apoptosis. Inhibits the apoptotic signals regulated by the Bcl-2 family proteins through the formation of a Nef/PI3-kinase/PAK2 complex that leads to activation of PAK2 and induces phosphorylation of host BAD. Functionally, extracellular Nef protein targets CD4(+) T-lymphocytes for apoptosis by interacting with CXCR4 surface receptors. The chain is Protein Nef from Homo sapiens (Human).